A 438-amino-acid polypeptide reads, in one-letter code: Protein kinase PINOID (438 aa).

Positions 1–24 are disordered; sequence MLRESDGEMSLGTTNSPISSGTES. The span at 11-24 shows a compositional bias: polar residues; sequence LGTTNSPISSGTES. The Protein kinase domain maps to 75-394; it reads FRLMRRIGAG…AAEVKVHPFF (320 aa). ATP is bound by residues 81 to 89 and Lys-109; that span reads IGAGDIGTV. The active-site Proton acceptor is the Asp-205. An AGC-kinase C-terminal domain is found at 395-438; sequence KGLNFALIRTLTPPEIPSSVVKKPMKSATFSGRSSNKPAAFDYF.

Belongs to the protein kinase superfamily. Ser/Thr protein kinase family. In terms of assembly, interacts with PDK1, CML12 and PBP1. Component of a complex made of PINs (e.g. PIN1 and PIN2), MAB4/MELs (e.g. NPY1/MAB4 and NPY5/MEL1) and AGC kinases (e.g. D6PK and PID) at the plasma membrane. Binds directly to PIN2, NPY1/MAB4 and NPY5/MEL1. In terms of processing, autophosphorylated. Phosphorylated by PDK1. In terms of tissue distribution, expressed in root hair cells, shoot xylem parenchyma cells and endodermis around the vasculature. Expressed in anther primordia, vasculature of the growing flower stalk, young pedicels and bracts and developing sepals, but not in petals. In pistils, transiently expressed in the vasculature of the style and the septum, and in the integuments and funiculus of the developing ovule.

The protein resides in the cytoplasm. Its subcellular location is the cytosol. It localises to the cell membrane. The enzyme catalyses L-seryl-[protein] + ATP = O-phospho-L-seryl-[protein] + ADP + H(+). It carries out the reaction L-threonyl-[protein] + ATP = O-phospho-L-threonyl-[protein] + ADP + H(+). With respect to regulation, activated by magnesium and PDK1. Inhibited by staurosporine. Repressed by calcium. Its function is as follows. Serine/threonine-protein kinase involved in the regulation of auxin signaling. Acts as a positive regulator of cellular auxin efflux and regulates organ development by enhancing polar auxin transport. Phosphorylates conserved serine residues in the PIN auxin efflux carriers. Phosphorylation of PIN proteins is required and sufficient for apical-basal PIN polarity that enables directional intercellular auxin fluxes, which mediate differential growth, tissue patterning and organogenesis. Phosphorylates PIN proteins (e.g. PIN1 and PIN2), especially when NPY proteins (e.g. NPY1/MAB4 and NPY5/MEL1) are recruited at the plasma membrane; this enhances the polarized localizations (apical or basal) of PINs in the cell by limiting their lateral diffusion-based escape. Acts in association with PIN1 to control the establishment of bilateral symmetry and promotion of cotyledon outgrowth. Regulates root gravitropism through modulation of PIN2-dependent basipetal auxin transport. Required for polarization of PIN3-dependent auxin transport for hypocotyl gravitropic response. The protein kinase activity of PID is essential for its auxin efflux regulatory function. PID kinase and PP2A phosphatase activities antagonistically regulate phosphorylation of PIN proteins, affecting PIN sorting. The sequence is that of Protein kinase PINOID from Arabidopsis thaliana (Mouse-ear cress).